Here is a 740-residue protein sequence, read N- to C-terminus: Leucine-rich repeat neuronal protein 4 (740 aa).

The N-terminal stretch at 1–18 (MRQTLPLLLLTVLRPSWA) is a signal peptide. Residues 19-679 (DPPQEKVPLF…PCAAFTTKPS (661 aa)) lie on the Extracellular side of the membrane. An N-linked (GlcNAc...) asparagine glycan is attached at Asn-42. 10 LRR repeats span residues 51–74 (LPAA…GCLP), 75–97 (RTLR…ELGH), 98–123 (LEQL…GPAG), 125–144 (HTLD…TGPA), 145–168 (LSSL…AFAC), 174–197 (LLNL…AFAG), 203–226 (LVTL…WIRD), 228–251 (PKLT…IFKM), 253–276 (PNLQ…IFQD), and 277–300 (TPHL…TLDS). Residue Asn-176 is glycosylated (N-linked (GlcNAc...) asparagine). N-linked (GlcNAc...) asparagine glycans are attached at residues Asn-289, Asn-379, and Asn-442. The interval 389–517 (VAPSAAPATR…QAPNPSLSEG (129 aa)) is disordered. 2 stretches are compositionally biased toward polar residues: residues 430–454 (APST…STTR) and 490–514 (WDRS…NPSL). One can recognise a Fibronectin type-III domain in the interval 579-679 (IPDPPRLQGV…PCAAFTTKPS (101 aa)). Asn-622 carries an N-linked (GlcNAc...) asparagine glycan. A helical membrane pass occupies residues 680–700 (FALLLSGLCAASGLLLASTVV). Residues 701–740 (LSACLCRRGQTLGLQRCDTHLVAYKNPAFDDYPLGLQTVS) lie on the Cytoplasmic side of the membrane.

It localises to the membrane. Its function is as follows. May play an important role in hippocampus-dependent long-lasting memory. This is Leucine-rich repeat neuronal protein 4 (LRRN4) from Homo sapiens (Human).